Reading from the N-terminus, the 364-residue chain is Guanine nucleotide-binding protein alpha-6 subunit (364 aa).

A disordered region spans residues 1-29; sequence MGAGATGLRGARLSPEERANSSKSRAIDR. The N-myristoyl glycine moiety is linked to residue Gly2. Over residues 14-29 the composition is skewed to basic and acidic residues; sequence SPEERANSSKSRAIDR. Residues 40–363 enclose the G-alpha domain; sequence NRFKILLLGT…NENLRSAGLH (324 aa). Positions 43–56 are G1 motif; the sequence is KILLLGTAESGKST. GTP-binding positions include 48 to 55, 186 to 192, 211 to 215, 280 to 283, and Ala335; these read GTAESGKS, VHCRIST, DVGGQ, and NKYD. Positions 55 and 192 each coordinate Mg(2+). Positions 184–192 are G2 motif; the sequence is DIVHCRIST. The tract at residues 207–216 is G3 motif; the sequence is FKMVDVGGQR. A G4 motif region spans residues 276 to 283; the sequence is VLFLNKYD. A G5 motif region spans residues 333–338; the sequence is TTATDT.

Belongs to the G-alpha family. In terms of assembly, g proteins are composed of 3 units; alpha, beta and gamma. The alpha chain contains the guanine nucleotide binding site.

In terms of biological role, guanine nucleotide-binding proteins (G proteins) are involved as modulators or transducers in various transmembrane signaling systems. This Caenorhabditis elegans protein is Guanine nucleotide-binding protein alpha-6 subunit (gpa-6).